Here is a 487-residue protein sequence, read N- to C-terminus: Anthocyanidin 3-O-glucosyltransferase 5 (487 aa).

The active-site Proton acceptor is the His-22. An an anthocyanidin-binding site is contributed by His-22. The Charge relay role is filled by Asp-119. UDP-alpha-D-glucose is bound by residues Gln-354, His-369, Trp-372, Asn-373, Ser-374, and Glu-377. Residue Ala-392 participates in an anthocyanidin binding. Glu-393 and Gln-394 together coordinate UDP-alpha-D-glucose.

Belongs to the UDP-glycosyltransferase family. Faintly expressed in cotyledons.

The enzyme catalyses an anthocyanidin + UDP-alpha-D-glucose + H(+) = an anthocyanidin 3-O-beta-D-glucoside + UDP. Its pathway is pigment biosynthesis; anthocyanin biosynthesis. Functionally, in the presence of other necessary color factors, this glycosylation reaction allows the accumulation of anthocyanin pigments. This is Anthocyanidin 3-O-glucosyltransferase 5 (GT5) from Manihot esculenta (Cassava).